The primary structure comprises 340 residues: Phospho-N-acetylmuramoyl-pentapeptide-transferase (340 aa).

A run of 10 helical transmembrane segments spans residues 3–23, 53–73, 79–99, 119–139, 144–164, 176–196, 200–220, 227–247, 250–270, and 315–335; these read MSLI…PHFI, GGTV…FHVF, AYGA…IGFL, MALQ…PSGT, IGGL…FWIV, IDGL…IIAF, ELAI…FFVF, VFMG…ISIA, VEWT…SVML, and VDAF…WMVL.

The protein belongs to the glycosyltransferase 4 family. MraY subfamily. Mg(2+) serves as cofactor.

It is found in the cell membrane. It carries out the reaction UDP-N-acetyl-alpha-D-muramoyl-L-alanyl-gamma-D-glutamyl-L-lysyl-D-alanyl-D-alanine + di-trans,octa-cis-undecaprenyl phosphate = Mur2Ac(oyl-L-Ala-gamma-D-Glu-L-Lys-D-Ala-D-Ala)-di-trans,octa-cis-undecaprenyl diphosphate + UMP. It participates in cell wall biogenesis; peptidoglycan biosynthesis. Functionally, catalyzes the initial step of the lipid cycle reactions in the biosynthesis of the cell wall peptidoglycan: transfers peptidoglycan precursor phospho-MurNAc-pentapeptide from UDP-MurNAc-pentapeptide onto the lipid carrier undecaprenyl phosphate, yielding undecaprenyl-pyrophosphoryl-MurNAc-pentapeptide, known as lipid I. This chain is Phospho-N-acetylmuramoyl-pentapeptide-transferase, found in Streptococcus thermophilus (strain ATCC BAA-250 / LMG 18311).